The following is a 610-amino-acid chain: Atypical kinase COQ8, mitochondrial (610 aa).

Positions 98-111 are enriched in basic and acidic residues; it reads GVKHLQEQSSKEIK. The disordered stretch occupies residues 98 to 144; the sequence is GVKHLQEQSSKEIKNPISQPILPNKKDEISPAKPSAIDSSIKDVTKS.

It belongs to the protein kinase superfamily. ADCK protein kinase family.

It localises to the mitochondrion. The protein operates within cofactor biosynthesis; ubiquinone biosynthesis. In terms of biological role, atypical kinase involved in the biosynthesis of coenzyme Q, also named ubiquinone, an essential lipid-soluble electron transporter for aerobic cellular respiration. Its substrate specificity is still unclear: may act as a protein kinase that mediates phosphorylation of coq3. According to other reports, acts as a small molecule kinase, possibly a lipid kinase that phosphorylates a prenyl lipid in the ubiquinone biosynthesis pathway, as suggested by its ability to bind coenzyme Q lipid intermediates. The sequence is that of Atypical kinase COQ8, mitochondrial from Schizosaccharomyces pombe (strain 972 / ATCC 24843) (Fission yeast).